Consider the following 264-residue polypeptide: Thymidylate synthase (264 aa).

Residue Arg21 participates in dUMP binding. His51 is a binding site for (6R)-5,10-methylene-5,6,7,8-tetrahydrofolate. DUMP is bound at residue 126-127; sequence RR. Cys146 serves as the catalytic Nucleophile. Residues 166 to 169, Asn177, and 207 to 209 contribute to the dUMP site; these read RSAD and HIY. Asp169 is a (6R)-5,10-methylene-5,6,7,8-tetrahydrofolate binding site. Ala263 lines the (6R)-5,10-methylene-5,6,7,8-tetrahydrofolate pocket.

The protein belongs to the thymidylate synthase family. Bacterial-type ThyA subfamily. In terms of assembly, homodimer.

It localises to the cytoplasm. It catalyses the reaction dUMP + (6R)-5,10-methylene-5,6,7,8-tetrahydrofolate = 7,8-dihydrofolate + dTMP. It functions in the pathway pyrimidine metabolism; dTTP biosynthesis. Catalyzes the reductive methylation of 2'-deoxyuridine-5'-monophosphate (dUMP) to 2'-deoxythymidine-5'-monophosphate (dTMP) while utilizing 5,10-methylenetetrahydrofolate (mTHF) as the methyl donor and reductant in the reaction, yielding dihydrofolate (DHF) as a by-product. This enzymatic reaction provides an intracellular de novo source of dTMP, an essential precursor for DNA biosynthesis. The polypeptide is Thymidylate synthase (Brucella anthropi (strain ATCC 49188 / DSM 6882 / CCUG 24695 / JCM 21032 / LMG 3331 / NBRC 15819 / NCTC 12168 / Alc 37) (Ochrobactrum anthropi)).